An 826-amino-acid chain; its full sequence is Capsid-associated protein Vp91 (826 aa).

An N-terminal signal peptide occupies residues 1–18; the sequence is MSDVVLLVLAIIFIIIFV. Residues 147-196 form a C2HC BV-type zinc finger; it reads CVPINPCDTRAPGLYAMDEHLLDALVHSQHLDKDYTINAHLQHPTLYLRC. 2 disulfides stabilise this stretch: cysteine 207–cysteine 220 and cysteine 260–cysteine 273. N-linked (GlcNAc...) asparagine; by host glycosylation occurs at asparagine 210. In terms of domain architecture, Chitin-binding type-2 spans 223-281; the sequence is NELCQGRPDGYVLDYFPETLLVNEFVECYESKHVVKQCPEQHVFDRQLMTCVQAHPCAF. N-linked (GlcNAc...) asparagine; by host glycans are attached at residues asparagine 333, asparagine 371, asparagine 413, asparagine 510, asparagine 520, and asparagine 609. The disordered stretch occupies residues 651-679; that stretch reads GDGDHWGPDLPPPVQPDSEPDESEPEPEV. A compositionally biased stretch (acidic residues) spans 668–677; the sequence is SEPDESEPEP. N-linked (GlcNAc...) asparagine; by host glycosylation is present at asparagine 722.

The protein resides in the virion. Its function is as follows. Probable capsid-associated protein. In Epiphyas postvittana nucleopolyhedrovirus (EppoMNPV), this protein is Capsid-associated protein Vp91.